Reading from the N-terminus, the 319-residue chain is Acetyl-coenzyme A carboxylase carboxyl transferase subunit alpha (319 aa).

The CoA carboxyltransferase C-terminal domain maps to 35–296; that stretch reads DLDKEIEQLE…KANLLRQLED (262 aa).

The protein belongs to the AccA family. As to quaternary structure, acetyl-CoA carboxylase is a heterohexamer composed of biotin carboxyl carrier protein (AccB), biotin carboxylase (AccC) and two subunits each of ACCase subunit alpha (AccA) and ACCase subunit beta (AccD).

It localises to the cytoplasm. It carries out the reaction N(6)-carboxybiotinyl-L-lysyl-[protein] + acetyl-CoA = N(6)-biotinyl-L-lysyl-[protein] + malonyl-CoA. It participates in lipid metabolism; malonyl-CoA biosynthesis; malonyl-CoA from acetyl-CoA: step 1/1. Its function is as follows. Component of the acetyl coenzyme A carboxylase (ACC) complex. First, biotin carboxylase catalyzes the carboxylation of biotin on its carrier protein (BCCP) and then the CO(2) group is transferred by the carboxyltransferase to acetyl-CoA to form malonyl-CoA. The chain is Acetyl-coenzyme A carboxylase carboxyl transferase subunit alpha from Vibrio campbellii (strain ATCC BAA-1116).